The sequence spans 317 residues: Methionyl-tRNA formyltransferase (317 aa).

112–115 lines the (6S)-5,6,7,8-tetrahydrofolate pocket; that stretch reads SLLP.

The protein belongs to the Fmt family.

It carries out the reaction L-methionyl-tRNA(fMet) + (6R)-10-formyltetrahydrofolate = N-formyl-L-methionyl-tRNA(fMet) + (6S)-5,6,7,8-tetrahydrofolate + H(+). Attaches a formyl group to the free amino group of methionyl-tRNA(fMet). The formyl group appears to play a dual role in the initiator identity of N-formylmethionyl-tRNA by promoting its recognition by IF2 and preventing the misappropriation of this tRNA by the elongation apparatus. This chain is Methionyl-tRNA formyltransferase, found in Geobacter sulfurreducens (strain ATCC 51573 / DSM 12127 / PCA).